Here is a 499-residue protein sequence, read N- to C-terminus: Pyruvate kinase 1 (499 aa).

Arg-50 contacts substrate. K(+)-binding residues include Asn-52, Ser-54, Asp-84, and Thr-85. 52 to 55 (NFSH) contributes to the ATP binding site. Arg-91 is an ATP binding site. Glu-241 contacts Mg(2+). Positions 264, 265, and 297 each coordinate substrate. Asp-265 is a Mg(2+) binding site.

Belongs to the pyruvate kinase family. Homotetramer. The cofactor is Mg(2+). K(+) serves as cofactor.

It carries out the reaction pyruvate + ATP = phosphoenolpyruvate + ADP + H(+). It functions in the pathway carbohydrate degradation; glycolysis; pyruvate from D-glyceraldehyde 3-phosphate: step 5/5. With respect to regulation, activated by fructose 2,6-bisphosphate, activated by the effector in a cooperative manner. The chain is Pyruvate kinase 1 (PYK1) from Trypanosoma brucei brucei.